A 463-amino-acid polypeptide reads, in one-letter code: Kynureninase 2 (463 aa).

Residues Leu-134, Thr-135, 162–165, Asp-247, His-250, and Tyr-272 each bind pyridoxal 5'-phosphate; that span reads FPSD. Position 273 is an N6-(pyridoxal phosphate)lysine (Lys-273). Positions 312 and 340 each coordinate pyridoxal 5'-phosphate.

The protein belongs to the kynureninase family. In terms of assembly, homodimer. Requires pyridoxal 5'-phosphate as cofactor.

It localises to the cytoplasm. It carries out the reaction L-kynurenine + H2O = anthranilate + L-alanine + H(+). The catalysed reaction is 3-hydroxy-L-kynurenine + H2O = 3-hydroxyanthranilate + L-alanine + H(+). Its pathway is amino-acid degradation; L-kynurenine degradation; L-alanine and anthranilate from L-kynurenine: step 1/1. The protein operates within cofactor biosynthesis; NAD(+) biosynthesis; quinolinate from L-kynurenine: step 2/3. In terms of biological role, catalyzes the cleavage of L-kynurenine (L-Kyn) and L-3-hydroxykynurenine (L-3OHKyn) into anthranilic acid (AA) and 3-hydroxyanthranilic acid (3-OHAA), respectively. This is Kynureninase 2 (bna5-2) from Aspergillus terreus (strain NIH 2624 / FGSC A1156).